Here is a 180-residue protein sequence, read N- to C-terminus: Centromere protein M (180 aa).

In terms of assembly, component of the CENPA-NAC complex, at least composed of CENPA, CENPC, CENPH, CENPM, CENPN, CENPT and CENPU. The CENPA-NAC complex interacts with the CENPA-CAD complex, composed of CENPI, CENPK, CENPL, CENPO, CENPP, CENPQ, CENPR and CENPS. As to expression, isoform 3 is highly expressed in spleen, and intermediately in heart, prostate and ovary. Isoform 3 is highly expressed in resting CD19 B-cells and B-lineage chronic lymphocytic leukemia (B-CLL) cells and weakly expressed in activated B-cells. Isoform 1 is selectively expressed in activated CD19 cells and weakly in resting CD19 B-cells.

Its subcellular location is the nucleus. The protein localises to the cytoplasm. It is found in the chromosome. The protein resides in the centromere. It localises to the kinetochore. In terms of biological role, component of the CENPA-NAC (nucleosome-associated) complex, a complex that plays a central role in assembly of kinetochore proteins, mitotic progression and chromosome segregation. The CENPA-NAC complex recruits the CENPA-CAD (nucleosome distal) complex and may be involved in incorporation of newly synthesized CENPA into centromeres. In Homo sapiens (Human), this protein is Centromere protein M (CENPM).